Reading from the N-terminus, the 533-residue chain is Retinoic acid receptor RXR-beta (533 aa).

The disordered stretch occupies residues 1–23 (MSWAARPPFLPQRHAAGQCGPVG). Positions 1–204 (MSWAARPPFL…PGGPGAGKRL (204 aa)) are modulating. Arg25 is modified (omega-N-methylarginine). The tract at residues 36–181 (WRRRRPWLDP…GSGPPEDVKP (146 aa)) is disordered. A compositionally biased stretch (low complexity) spans 46 to 61 (AAAAAAAVAGGEQQTP). Residues 67–82 (EAGRDGMGDSGRDSRS) show a composition bias toward basic and acidic residues. Pro residues-rich tracts occupy residues 89–109 (NPLPQGVPPPSPPGPPLPPST) and 118–131 (APPPPPMPPPPLGS). The span at 132–143 (PFPVISSSMGSP) shows a compositional bias: low complexity. The span at 144 to 153 (GLPPPAPPGF) shows a compositional bias: pro residues. NR C4-type zinc fingers lie at residues 205-225 (CAICGDRSSGKHYGVYSCEGC) and 241-265 (CRDNKDCTVDKRQRNRCQYCRYQKC). The nuclear receptor DNA-binding region spans 205–270 (CAICGDRSSG…RYQKCLATGM (66 aa)). Residues 271 to 295 (KREAVQEERQRGKDKDGDGEGAGGA) form a hinge region. A compositionally biased stretch (basic and acidic residues) spans 276–288 (QEERQRGKDKDGD). Disordered regions lie at residues 276-299 (QEERQRGKDKDGDGEGAGGAPEEM) and 313-336 (QKSDQGVEGPGGTGGSGSSPNDPV). Residues 296–529 (PEEMPVDRIL…TFLMEMLEAP (234 aa)) enclose the NR LBD domain. The segment covering 320-329 (EGPGGTGGSG) has biased composition (gly residues).

The protein belongs to the nuclear hormone receptor family. NR2 subfamily. Homodimer (in vitro). Heterodimer with other retinoic acid receptor family members. Binds DNA preferentially as a RAR/RXR heterodimer. Interacts with NR1H3. Interacts with AKAP13. As to expression, expressed in aortic endothelial cells (at protein level). Expressed in monocytes. Expressed in a variety of tumor cell lines.

Its subcellular location is the nucleus. It is found in the cytoplasm. Its function is as follows. Receptor for retinoic acid. Retinoic acid receptors bind as heterodimers to their target response elements in response to their ligands, all-trans or 9-cis retinoic acid, and regulate gene expression in various biological processes. The RAR/RXR heterodimers bind to the retinoic acid response elements (RARE). The polypeptide is Retinoic acid receptor RXR-beta (RXRB) (Homo sapiens (Human)).